The chain runs to 339 residues: 5-dehydro-2-deoxygluconokinase (339 aa).

Belongs to the carbohydrate kinase PfkB family.

The enzyme catalyses 5-dehydro-2-deoxy-D-gluconate + ATP = 6-phospho-5-dehydro-2-deoxy-D-gluconate + ADP + H(+). The protein operates within polyol metabolism; myo-inositol degradation into acetyl-CoA; acetyl-CoA from myo-inositol: step 5/7. Its function is as follows. Catalyzes the phosphorylation of 5-dehydro-2-deoxy-D-gluconate (2-deoxy-5-keto-D-gluconate or DKG) to 6-phospho-5-dehydro-2-deoxy-D-gluconate (DKGP). This Clostridium botulinum (strain Alaska E43 / Type E3) protein is 5-dehydro-2-deoxygluconokinase.